The sequence spans 288 residues: Beta-lactamase CARB-4 (288 aa).

The N-terminal stretch at 1 to 17 (MKLLLVFSLLIPSMVFA) is a signal peptide. Catalysis depends on serine 65, which acts as the Acyl-ester intermediate. Cysteine 72 and cysteine 118 are disulfide-bonded. A substrate-binding site is contributed by 229–231 (RSG).

Belongs to the class-A beta-lactamase family.

The catalysed reaction is a beta-lactam + H2O = a substituted beta-amino acid. Its activity is regulated as follows. Inhibited by clavulanic acid and sulbactam. Hydrolyzes carbenicillin. Methicillin and oxacillin are weakly hydrolyzed. The protein is Beta-lactamase CARB-4 (carB4) of Pseudomonas aeruginosa.